We begin with the raw amino-acid sequence, 131 residues long: F(420)H(2) dehydrogenase subunit O (131 aa).

Residues cysteine 58, cysteine 63, and cysteine 66 each coordinate [2Fe-2S] cluster.

It belongs to the FpoO family. As to quaternary structure, the FPO complex is composed of at least 13 different subunits. The cofactor is [2Fe-2S] cluster.

The catalysed reaction is methanophenazine + reduced coenzyme F420-(gamma-L-Glu)(n) = dihydromethanophenazine + oxidized coenzyme F420-(gamma-L-Glu)(n) + H(+). In terms of biological role, component of the F(420)H(2) dehydrogenase (FPO complex) which is part of the energy-conserving F(420)H(2):heterodisulfide oxidoreductase system. The membrane-bound electron transfer system of the complex plays an important role in the metabolism of methylotrophic methanogens when the organisms grow on methanol or methylamines. Catalyzes the oxidation of methanophenazine to dihydromethanophenazine. It shuttles electrons from F(420)H(2), via FAD and iron-sulfur (Fe-S) centers, to methanophenazine (an electron carrier in the membrane). It couples the redox reaction to proton translocation (for every two electrons transferred, two hydrogen ions are translocated across the cytoplasmic membrane), and thus conserves the redox energy in a proton gradient. It also catalyzes the oxidation of F(420)H(2) with quinones such as 2,3-dimethyl-1,4-naphthoquinone, 2-methyl-1,4-naphthoquinone and tetramethyl-p-benzoquinone. This is F(420)H(2) dehydrogenase subunit O (fpoO) from Methanosarcina mazei (strain ATCC BAA-159 / DSM 3647 / Goe1 / Go1 / JCM 11833 / OCM 88) (Methanosarcina frisia).